Reading from the N-terminus, the 438-residue chain is tRNA-2-methylthio-N(6)-dimethylallyladenosine synthase (438 aa).

Residues 2–118 (KSFYLETFGC…LADMVRDAEL (117 aa)) form the MTTase N-terminal domain. 6 residues coordinate [4Fe-4S] cluster: C11, C47, C81, C157, C161, and C164. The Radical SAM core domain maps to 143 to 373 (PSAEVSRFVT…LALQEEITRQ (231 aa)). The region spanning 376–438 (QMDIGQVLPV…YRNSHLGERV (63 aa)) is the TRAM domain.

Belongs to the methylthiotransferase family. MiaB subfamily. In terms of assembly, monomer. Requires [4Fe-4S] cluster as cofactor.

It localises to the cytoplasm. It catalyses the reaction N(6)-dimethylallyladenosine(37) in tRNA + (sulfur carrier)-SH + AH2 + 2 S-adenosyl-L-methionine = 2-methylsulfanyl-N(6)-dimethylallyladenosine(37) in tRNA + (sulfur carrier)-H + 5'-deoxyadenosine + L-methionine + A + S-adenosyl-L-homocysteine + 2 H(+). Its function is as follows. Catalyzes the methylthiolation of N6-(dimethylallyl)adenosine (i(6)A), leading to the formation of 2-methylthio-N6-(dimethylallyl)adenosine (ms(2)i(6)A) at position 37 in tRNAs that read codons beginning with uridine. The polypeptide is tRNA-2-methylthio-N(6)-dimethylallyladenosine synthase (Syntrophotalea carbinolica (strain DSM 2380 / NBRC 103641 / GraBd1) (Pelobacter carbinolicus)).